The primary structure comprises 136 residues: Small ribosomal subunit protein uS8c (136 aa).

Belongs to the universal ribosomal protein uS8 family. In terms of assembly, part of the 30S ribosomal subunit.

The protein resides in the plastid. The protein localises to the chloroplast. Functionally, one of the primary rRNA binding proteins, it binds directly to 16S rRNA central domain where it helps coordinate assembly of the platform of the 30S subunit. This Tetradesmus obliquus (Green alga) protein is Small ribosomal subunit protein uS8c (rps8).